The chain runs to 153 residues: Superoxide dismutase [Cu-Zn] (153 aa).

Residues H46, H48, and H63 each contribute to the Cu cation site. An intrachain disulfide couples C57 to C146. Residues 61–80 form a disordered region; sequence GPHFNPFGKEHGAPEDENRH. Positions 63, 71, 80, and 83 each coordinate Zn(2+). The segment covering 68-80 has biased composition (basic and acidic residues); that stretch reads GKEHGAPEDENRH. H120 is a Cu cation binding site. Basic and acidic residues predominate over residues 124-136; the sequence is DDLGRSEHPESKK. Residues 124–143 form a disordered region; that stretch reads DDLGRSEHPESKKTGNAGAR. R143 serves as a coordination point for substrate.

The protein belongs to the Cu-Zn superoxide dismutase family. In terms of assembly, homodimer. The cofactor is Cu cation. Zn(2+) serves as cofactor.

The protein resides in the cytoplasm. The catalysed reaction is 2 superoxide + 2 H(+) = H2O2 + O2. Its function is as follows. Destroys radicals which are normally produced within the cells and which are toxic to biological systems. This is Superoxide dismutase [Cu-Zn] (sodC) from Aspergillus flavus.